A 327-amino-acid chain; its full sequence is Metapyrocatechase (327 aa).

2 VOC domains span residues 14 to 126 (QLAH…IFFE) and 156 to 276 (RLDH…LFGD). Fe cation contacts are provided by H159, H221, and E272.

Belongs to the extradiol ring-cleavage dioxygenase family. It depends on Fe(2+) as a cofactor.

The enzyme catalyses catechol + O2 = (2Z,4E)-2-hydroxy-6-oxohexa-2,4-dienoate + H(+). This chain is Metapyrocatechase (pheB), found in Geobacillus stearothermophilus (Bacillus stearothermophilus).